The sequence spans 431 residues: Trigger factor (431 aa).

A PPIase FKBP-type domain is found at 160–245 (EDRVTIDFSG…LKKVEVMVLP (86 aa)).

Belongs to the FKBP-type PPIase family. Tig subfamily.

It localises to the cytoplasm. The enzyme catalyses [protein]-peptidylproline (omega=180) = [protein]-peptidylproline (omega=0). Involved in protein export. Acts as a chaperone by maintaining the newly synthesized protein in an open conformation. Functions as a peptidyl-prolyl cis-trans isomerase. The sequence is that of Trigger factor from Actinobacillus succinogenes (strain ATCC 55618 / DSM 22257 / CCUG 43843 / 130Z).